The sequence spans 148 residues: Large ribosomal subunit protein bL9 (148 aa).

It belongs to the bacterial ribosomal protein bL9 family.

Binds to the 23S rRNA. This is Large ribosomal subunit protein bL9 from Pseudomonas aeruginosa (strain LESB58).